A 644-amino-acid chain; its full sequence is Exoribonuclease 2 (644 aa).

Positions 189-516 constitute an RNB domain; that stretch reads RQDLTALNFV…NHRLLKAVIK (328 aa). The region spanning 561-643 is the S1 motif domain; that stretch reads NTRFAAEIID…ETRSIIARPA (83 aa).

The protein belongs to the RNR ribonuclease family. RNase II subfamily.

Its subcellular location is the cytoplasm. It catalyses the reaction Exonucleolytic cleavage in the 3'- to 5'-direction to yield nucleoside 5'-phosphates.. Functionally, involved in mRNA degradation. Hydrolyzes single-stranded polyribonucleotides processively in the 3' to 5' direction. This chain is Exoribonuclease 2, found in Salmonella enteritidis PT4 (strain P125109).